The primary structure comprises 604 residues: MCGILAVLGAADWSQAKRAHVLSCSRRLKHRGPDWSGLYQCEGNFLAQQRLAIVSPLSGDQPLYNADRTIVVVANGEIYNHKKIRKQFASKHTFSTGSDCEVIIPLYEEYGEDFVDMLDGVFAFVLYDTRTKTYMAARDAIGVNPLYIGRGSDGAVWISSEMKALNEDCVEFEIFPPGHLYSSAAGGLRRWYKPQWFAENVPATPYQPLLLREAFEKAVIKRLMTDVPFGVLLSGGLDSSLVAAVTKRHLIKTEAAEKFGAELHSFVVGLEGSPDLIAAREVADHLGTIHHEFHFTVQDGIDAIEEVIYHDETYDVTTIRASTPMFLMARKIKALGVKMVLSGEGSDELLGGYLYFHFAPNKEEFHKETCRKVKALHQYDCLRANKATSAWGLEVRVPFLDKEFINVAMSMDPEWKMYNADLGRIEKWVMRKAFDDEEHPYLPKHILYRQKEQFSDGVGYNWIDGLKAFTEQQVSDEMMKNAAKVYPHNTPVNKEAYYYRMIFERLFPQESARETVPWGPSIACSTPAAIEWVEQWKASHDPSGRLIASHNSASASANHTNHANANANGNSNGKANGNCAMAANGTNGVGLVVANGTANGKMEA.

C2 acts as the Nucleophile in catalysis. A Glutamine amidotransferase type-2 domain is found at 2–186 (CGILAVLGAA…PGHLYSSAAG (185 aa)). L-glutamine is bound by residues 50-54 (RLAIV), 75-77 (NGE), and D99. Residues 211–451 (LREAFEKAVI…LPKHILYRQK (241 aa)) form the Asparagine synthetase domain. Residues L232, V268, and 342–343 (SG) contribute to the ATP site.

The catalysed reaction is L-aspartate + L-glutamine + ATP + H2O = L-asparagine + L-glutamate + AMP + diphosphate + H(+). Its pathway is amino-acid biosynthesis; L-asparagine biosynthesis. In terms of biological role, essential for nitrogen assimilation, distribution and remobilization within the plant via the phloem. The chain is Asparagine synthetase [glutamine-hydrolyzing] 1 from Oryza sativa subsp. japonica (Rice).